We begin with the raw amino-acid sequence, 496 residues long: Beta-amylase (496 aa).

Ala-2 is subject to N-acetylalanine. The substrate site is built by Asp-54, His-94, and Asp-102. Glu-187 (proton donor) is an active-site residue. Positions 296, 301, and 343 each coordinate substrate. The Proton acceptor role is filled by Glu-381. Residues 382–383 and Arg-421 each bind substrate; that span reads NA.

The protein belongs to the glycosyl hydrolase 14 family. Monomer.

It catalyses the reaction Hydrolysis of (1-&gt;4)-alpha-D-glucosidic linkages in polysaccharides so as to remove successive maltose units from the non-reducing ends of the chains.. The protein is Beta-amylase (BMY1) of Glycine max (Soybean).